An 89-amino-acid polypeptide reads, in one-letter code: Small ribosomal subunit protein uS14A (89 aa).

It belongs to the universal ribosomal protein uS14 family. Contacts proteins S3 and S10. Part of the 30S ribosomal subunit.

Its function is as follows. Binds 16S rRNA, required for the assembly of 30S particles and may also be responsible for determining the conformation of the 16S rRNA at the A site. In terms of biological role, non-essential protein. A second form of uS14, it can integrate into the 30S subunit where it partially compensates for loss of the major uS14 protein (AC P12878) in restoring 70S formation, although it does not seem to be incorporated into the ribosome as well as the major uS14. The protein is Small ribosomal subunit protein uS14A of Bacillus subtilis (strain 168).